The chain runs to 692 residues: Polyribonucleotide nucleotidyltransferase (692 aa).

Mg(2+)-binding residues include aspartate 484 and aspartate 490. The 60-residue stretch at 551 to 610 folds into the KH domain; sequence PRIITIQINPDRIRDVIGPGGKVIRALTEETGATIDIQDNGTVTIASVDGEAGAAAKRRI. In terms of domain architecture, S1 motif spans 620-688; the sequence is DTIYDGKVAK…RQGKIKLSMK (69 aa).

The protein belongs to the polyribonucleotide nucleotidyltransferase family. In terms of assembly, component of the RNA degradosome, which is a multiprotein complex involved in RNA processing and mRNA degradation. The cofactor is Mg(2+).

It localises to the cytoplasm. It catalyses the reaction RNA(n+1) + phosphate = RNA(n) + a ribonucleoside 5'-diphosphate. In terms of biological role, involved in mRNA degradation. Catalyzes the phosphorolysis of single-stranded polyribonucleotides processively in the 3'- to 5'-direction. The chain is Polyribonucleotide nucleotidyltransferase from Acidithiobacillus ferrooxidans (strain ATCC 53993 / BNL-5-31) (Leptospirillum ferrooxidans (ATCC 53993)).